The sequence spans 206 residues: GTP-binding protein YPT1 (206 aa).

Met1 is modified (N-acetylmethionine). GTP contacts are provided by residues Ser17–Cys23, Tyr33–Thr40, Gly66, and Asn121–Asp124. The S-palmitoyl cysteine moiety is linked to residue Cys23. The Effector region signature appears at Tyr37–Phe45. Residues Asp63–Gly80 form an interaction with GDI1 region. Cys123 is lipidated: S-palmitoyl cysteine. Lys144 participates in a covalent cross-link: Glycyl lysine isopeptide (Lys-Gly) (interchain with G-Cter in ubiquitin). Ala152–Leu153 provides a ligand contact to GTP. Ser172 and Ser174 each carry phosphoserine. The tract at residues Met173–Cys206 is disordered. The interaction with GDI1 stretch occupies residues Gly189–Gly195. 2 S-geranylgeranyl cysteine lipidation sites follow: Cys205 and Cys206.

The protein belongs to the small GTPase superfamily. Rab family. Forms a complex with the Rab escort protein (REP) MRS6, which is recognized by Rab geranylgeranyltransferase BET2-BET4. Interacts with the Rab GDP dissociation inhibitor GDI1, which can retrieve from and deliver to membranes the GDP-bound and prenylated form of YPT1. Interacts with YIP1, which is required for proper membrane targeting of prenylated YPT1. Interacts with YIF1, YIP3, YIP4 and YIP5. Prenylation is required for interaction with GDI1 and YIP1.

The protein localises to the endoplasmic reticulum membrane. It is found in the golgi apparatus membrane. It localises to the cytoplasm. Its subcellular location is the preautophagosomal structure membrane. Rab activation is generally mediated by a guanine exchange factor (GEF), while inactivation through hydrolysis of bound GTP is catalyzed by a GTPase activating protein (GAP). YPT1 is activated by the GEFs DSS4 and TRAPP complex, and inactivated by GAPs GYP1, GYP5 and GYP8. The small GTPases Rab are key regulators of intracellular membrane trafficking, from the formation of transport vesicles to their fusion with membranes. Rabs cycle between an inactive GDP-bound form and an active GTP-bound form that is able to recruit to membranes different set of downstream effectors directly responsible for vesicle formation, movement, tethering and fusion. YPT1 regulates the trafficking of secretory vesicles from the endoplasmic reticulum (ER) to the Golgi. Vesicular transport depends on shuttling of YPT1 between membrane and cytosol by GDI1, probably by recycling it to its membrane of origin after a vesicle fusion event. Plays a role in the initial events of the autophagic vacuole development which take place at specialized regions of the endoplasmic reticulum. Also involved in the recycling of membrane proteins. The polypeptide is GTP-binding protein YPT1 (YPT1) (Saccharomyces cerevisiae (strain ATCC 204508 / S288c) (Baker's yeast)).